The following is a 643-amino-acid chain: Macrolide export ATP-binding/permease protein MacB (643 aa).

Residues 6 to 244 form the ABC transporter domain; the sequence is IELKGVSRVF…QVRSPFGVRH (239 aa). 42–49 lines the ATP pocket; the sequence is GASGSGKS. A run of 4 helical transmembrane segments spans residues 270–290, 518–538, 569–589, and 606–626; these read VLTL…LAIG, LTIL…IGVM, FLIE…VIGL, and LMPI…FGYL.

This sequence belongs to the ABC transporter superfamily. Macrolide exporter (TC 3.A.1.122) family. Homodimer.

The protein localises to the cell inner membrane. Functionally, non-canonical ABC transporter that contains transmembrane domains (TMD), which form a pore in the inner membrane, and an ATP-binding domain (NBD), which is responsible for energy generation. Confers resistance against macrolides. This Wolinella succinogenes (strain ATCC 29543 / DSM 1740 / CCUG 13145 / JCM 31913 / LMG 7466 / NCTC 11488 / FDC 602W) (Vibrio succinogenes) protein is Macrolide export ATP-binding/permease protein MacB.